The following is a 513-amino-acid chain: Trigger factor (513 aa).

A PPIase FKBP-type domain is found at 164–249 (GDQIIIDFLG…VKAVKNAGEF (86 aa)). Positions 436–513 (QAAIEAEEGA…KAPAKKKAEG (78 aa)) are disordered. The segment covering 452–461 (AKKAPAKKKA) has biased composition (basic residues). Residues 489-498 (ADEAPAAEEA) are compositionally biased toward low complexity. Residues 501-513 (AKKKAPAKKKAEG) show a composition bias toward basic residues.

It belongs to the FKBP-type PPIase family. Tig subfamily.

The protein resides in the cytoplasm. It carries out the reaction [protein]-peptidylproline (omega=180) = [protein]-peptidylproline (omega=0). Involved in protein export. Acts as a chaperone by maintaining the newly synthesized protein in an open conformation. Functions as a peptidyl-prolyl cis-trans isomerase. The protein is Trigger factor of Novosphingobium aromaticivorans (strain ATCC 700278 / DSM 12444 / CCUG 56034 / CIP 105152 / NBRC 16084 / F199).